Consider the following 483-residue polypeptide: Aspartyl/glutamyl-tRNA(Asn/Gln) amidotransferase subunit B (483 aa).

This sequence belongs to the GatB/GatE family. GatB subfamily. In terms of assembly, heterotrimer of A, B and C subunits.

The catalysed reaction is L-glutamyl-tRNA(Gln) + L-glutamine + ATP + H2O = L-glutaminyl-tRNA(Gln) + L-glutamate + ADP + phosphate + H(+). The enzyme catalyses L-aspartyl-tRNA(Asn) + L-glutamine + ATP + H2O = L-asparaginyl-tRNA(Asn) + L-glutamate + ADP + phosphate + 2 H(+). Its function is as follows. Allows the formation of correctly charged Asn-tRNA(Asn) or Gln-tRNA(Gln) through the transamidation of misacylated Asp-tRNA(Asn) or Glu-tRNA(Gln) in organisms which lack either or both of asparaginyl-tRNA or glutaminyl-tRNA synthetases. The reaction takes place in the presence of glutamine and ATP through an activated phospho-Asp-tRNA(Asn) or phospho-Glu-tRNA(Gln). This is Aspartyl/glutamyl-tRNA(Asn/Gln) amidotransferase subunit B from Rickettsia rickettsii (strain Iowa).